A 270-amino-acid chain; its full sequence is Tryptophan synthase alpha chain (270 aa).

Residues glutamate 49 and aspartate 60 each act as proton acceptor in the active site.

The protein belongs to the TrpA family. Tetramer of two alpha and two beta chains.

The catalysed reaction is (1S,2R)-1-C-(indol-3-yl)glycerol 3-phosphate + L-serine = D-glyceraldehyde 3-phosphate + L-tryptophan + H2O. It participates in amino-acid biosynthesis; L-tryptophan biosynthesis; L-tryptophan from chorismate: step 5/5. Its function is as follows. The alpha subunit is responsible for the aldol cleavage of indoleglycerol phosphate to indole and glyceraldehyde 3-phosphate. The sequence is that of Tryptophan synthase alpha chain from Pseudomonas savastanoi pv. phaseolicola (strain 1448A / Race 6) (Pseudomonas syringae pv. phaseolicola (strain 1448A / Race 6)).